Reading from the N-terminus, the 331-residue chain is Serine/threonine-protein phosphatase 6 catalytic subunit (331 aa).

Positions 79, 81, 107, and 139 each coordinate Mn(2+). The Proton donor role is filled by H140. H189 and H264 together coordinate Mn(2+).

The protein belongs to the PPP phosphatase family. PP-6 (PP-V) subfamily. In terms of assembly, forms a complex composed of catalytic subunit pph-6 and regulatory subunit saps-1; the interaction increases pph-6 and saps-1 protein stability. Mn(2+) serves as cofactor.

The protein localises to the cytoplasm. It is found in the cell cortex. It localises to the cytoskeleton. The protein resides in the spindle pole. The enzyme catalyses O-phospho-L-seryl-[protein] + H2O = L-seryl-[protein] + phosphate. The catalysed reaction is O-phospho-L-threonyl-[protein] + H2O = L-threonyl-[protein] + phosphate. Functionally, catalytic subunit of protein phosphatase 6 (PP6). In complex with saps-1, promotes actomyosin contractility during cytokinesis by regulating the organization of cortical non-muscle myosin II nmy-2 and thus contributing to correct spindle positioning. Also required for the proper generation of pulling forces on spindle poles during anaphase by regulating the cortical localization of gpr-1, gpr-2 and lin-5. The sequence is that of Serine/threonine-protein phosphatase 6 catalytic subunit from Caenorhabditis elegans.